We begin with the raw amino-acid sequence, 362 residues long: MERITVTLGERSYPITIAAGLFNEPASFLPLKSGDQVMLVTNETLAPLYLDKIRSVLEQAGVNVDSVTLPDGEKYKSLTVLDTVFTALLQKPHGRDTTLVALGGGVIGDLTGFAAASYQRGVRFIQVPTTLLSQVDSSVGGKTAVNHPLGKNMIGAFYQPASVVVDLDCLKTLPARELASGLAEVIKYGIILDGEFFTWLEDNLDALLRLEGPAMAYCIRRCCELKAEVVAADERETGLRALLNLGHTFGHAIEAEMGYGNWLHGEAVAAGMVMAARTSERLGQFSAADTQRIITLLQRAGLPVHGPREMSAQAYLPHMLRDKKVLAGEMRLVLPLAIGKSEVRGGVPHEIVLSAIADCQQA.

Residues Asp71–Lys76, Gly105–Asp109, Thr129–Thr130, Lys142, Lys151, and Cys169–Thr172 each bind NAD(+). The Zn(2+) site is built by Glu184, His247, and His264.

Belongs to the sugar phosphate cyclases superfamily. Dehydroquinate synthase family. The cofactor is Co(2+). Zn(2+) serves as cofactor. NAD(+) is required as a cofactor.

The protein resides in the cytoplasm. The catalysed reaction is 7-phospho-2-dehydro-3-deoxy-D-arabino-heptonate = 3-dehydroquinate + phosphate. Its pathway is metabolic intermediate biosynthesis; chorismate biosynthesis; chorismate from D-erythrose 4-phosphate and phosphoenolpyruvate: step 2/7. Catalyzes the conversion of 3-deoxy-D-arabino-heptulosonate 7-phosphate (DAHP) to dehydroquinate (DHQ). The protein is 3-dehydroquinate synthase of Citrobacter koseri (strain ATCC BAA-895 / CDC 4225-83 / SGSC4696).